Consider the following 270-residue polypeptide: uncharacterized protein (270 aa).

2 stretches are compositionally biased toward basic and acidic residues: residues Met-1 to Tyr-13 and Glu-49 to Lys-73. 3 disordered regions span residues Met-1–Glu-76, Ser-90–Glu-111, and Lys-204–Glu-270. Residues Ser-90 to Thr-102 show a composition bias toward polar residues. The span at Lys-204 to Lys-216 shows a compositional bias: basic residues. The span at Leu-218–Lys-235 shows a compositional bias: basic and acidic residues. The segment covering Gln-236–Val-253 has biased composition (basic residues).

This is an uncharacterized protein from Saccharomyces cerevisiae (strain ATCC 204508 / S288c) (Baker's yeast).